A 776-amino-acid chain; its full sequence is Transcriptional regulator QRICH1 (776 aa).

N-acetylmethionine is present on Met1. The region spanning 6–48 is the CARD domain; it reads ENTISFEEYIRVKARSVPQHRMKEFLDSLASKGPEALQEFQQT. 2 disordered regions span residues 139 to 164 and 218 to 240; these read IQGQ…PSQL and ALSP…GTAS. Residue Ser345 is modified to Phosphoserine. Glycyl lysine isopeptide (Lys-Gly) (interchain with G-Cter in SUMO2) cross-links involve residues Lys353 and Lys358. Over residues 419 to 429 the composition is skewed to low complexity; it reads QQQPQQQTPQE. Residues 419–441 form a disordered region; sequence QQQPQQQTPQEQTPPPQQQQQQL. The residue at position 464 (Ser464) is a Phosphoserine.

Its subcellular location is the nucleus. It localises to the cytoplasm. The protein resides in the cell membrane. Its function is as follows. Transcriptional regulator that acts as a mediator of the integrated stress response (ISR) through transcriptional control of protein homeostasis under conditions of ER stress. Controls the outcome of the unfolded protein response (UPR) which is an ER-stress response pathway. ER stress induces QRICH1 translation by a ribosome translation re-initiation mechanism in response to EIF2S1/eIF-2-alpha phosphorylation, and stress-induced QRICH1 regulates a transcriptional program associated with protein translation, protein secretion-mediated proteotoxicity and cell death during the terminal UPR. May cooperate with ATF4 transcription factor signaling to regulate ER homeostasis which is critical for cell viability. Up-regulates CASP3/caspase-3 activity in epithelial cells under ER stress. Central regulator of proteotoxicity associated with ER stress-mediated inflammatory diseases in the intestines and liver. Involved in chondrocyte hypertrophy, a process required for normal longitudinal bone growth. This is Transcriptional regulator QRICH1 from Homo sapiens (Human).